Reading from the N-terminus, the 313-residue chain is MSTAEAGGVFHRARGRTLDAFSSEKEREWKGPFYFIQGADPQFGLMKAWATGDCDNGGDEWEQEIRLAEQAVQAINKLNPKPKFFVLCGDLVHAMPGRPWRKEQTEDLQRVLRTVDSDIPLVLVSGNHDVGNVPTPETIAEFQRTWGDDYFSFWVGGVLFLVLNSQFLYDASRCPALKQEHDHWLDQQLRIAGQRACRHAVVFQHIPLFLQSIGEDDDYFNLTKSVRKEMADKFVEAGVKAVFSGHYHRNAGGTYRNLDMVVSSAIGCQLGTDTHGLRVVVVTAEKITHRYYSLDELSEKGIEDDLMDLLKEN.

At Ser-2 the chain carries Phosphoserine. Residues 47–250 (KAWATGDCDN…AVFSGHYHRN (204 aa)) form a catalytic region. A divalent metal cation-binding residues include Asp-53, Asp-90, Asn-127, and His-246. The residue at position 293 (Ser-293) is a Phosphoserine.

It belongs to the metallophosphoesterase superfamily. CPPED1 family. Requires a divalent metal cation as cofactor.

It localises to the cytoplasm. It carries out the reaction O-phospho-L-seryl-[protein] + H2O = L-seryl-[protein] + phosphate. The catalysed reaction is O-phospho-L-threonyl-[protein] + H2O = L-threonyl-[protein] + phosphate. Functionally, protein phosphatase that dephosphorylates AKT family kinase specifically at 'Ser-473', blocking cell cycle progression and promoting cell apoptosis. May play an inhibitory role in glucose uptake by adipocytes. This Bos taurus (Bovine) protein is Serine/threonine-protein phosphatase CPPED1 (CPPED1).